A 129-amino-acid polypeptide reads, in one-letter code: Small ribosomal subunit protein bS6 (129 aa).

It belongs to the bacterial ribosomal protein bS6 family.

Functionally, binds together with bS18 to 16S ribosomal RNA. The chain is Small ribosomal subunit protein bS6 from Microcystis aeruginosa (strain NIES-843 / IAM M-2473).